The sequence spans 516 residues: Cytochrome P450 1A2 (516 aa).

S69 carries O-linked (GlcNAc) serine glycosylation. Substrate is bound at residue F226. Residue C458 coordinates heme.

It belongs to the cytochrome P450 family. In terms of assembly, interacts with PGRMC1; the interaction requires PGRMC1 homodimerization. It depends on heme as a cofactor.

The protein localises to the endoplasmic reticulum membrane. It is found in the microsome membrane. The enzyme catalyses an organic molecule + reduced [NADPH--hemoprotein reductase] + O2 = an alcohol + oxidized [NADPH--hemoprotein reductase] + H2O + H(+). The catalysed reaction is 17beta-estradiol + reduced [NADPH--hemoprotein reductase] + O2 = 2-hydroxy-17beta-estradiol + oxidized [NADPH--hemoprotein reductase] + H2O + H(+). It carries out the reaction 17beta-estradiol + reduced [NADPH--hemoprotein reductase] + O2 = 4-hydroxy-17beta-estradiol + oxidized [NADPH--hemoprotein reductase] + H2O + H(+). It catalyses the reaction estrone + reduced [NADPH--hemoprotein reductase] + O2 = 2-hydroxyestrone + oxidized [NADPH--hemoprotein reductase] + H2O + H(+). The enzyme catalyses estrone + reduced [NADPH--hemoprotein reductase] + O2 = 4-hydroxyestrone + oxidized [NADPH--hemoprotein reductase] + H2O + H(+). The catalysed reaction is cholesterol + reduced [NADPH--hemoprotein reductase] + O2 = 25-hydroxycholesterol + oxidized [NADPH--hemoprotein reductase] + H2O + H(+). It carries out the reaction all-trans-retinol + reduced [NADPH--hemoprotein reductase] + O2 = all-trans-retinal + oxidized [NADPH--hemoprotein reductase] + 2 H2O + H(+). It catalyses the reaction all-trans-retinal + reduced [NADPH--hemoprotein reductase] + O2 = all-trans-retinoate + oxidized [NADPH--hemoprotein reductase] + H2O + 2 H(+). The enzyme catalyses (5Z,8Z,11Z,14Z)-eicosatetraenoate + reduced [NADPH--hemoprotein reductase] + O2 = (14R,15S)-epoxy-(5Z,8Z,11Z)-eicosatrienoate + oxidized [NADPH--hemoprotein reductase] + H2O + H(+). The catalysed reaction is (5Z,8Z,11Z,14Z)-eicosatetraenoate + reduced [NADPH--hemoprotein reductase] + O2 = (14S,15R)-epoxy-(5Z,8Z,11Z)-eicosatrienoate + oxidized [NADPH--hemoprotein reductase] + H2O + H(+). It carries out the reaction (5Z,8Z,11Z,14Z,17Z)-eicosapentaenoate + reduced [NADPH--hemoprotein reductase] + O2 = (17R,18S)-epoxy-(5Z,8Z,11Z,14Z)-eicosatetraenoate + oxidized [NADPH--hemoprotein reductase] + H2O + H(+). It catalyses the reaction (4Z,7Z,10Z,13Z,16Z,19Z)-docosahexaenoate + reduced [NADPH--hemoprotein reductase] + O2 = (19R,20S)-epoxy-(4Z,7Z,10Z,13Z,16Z)-docosapentaenoate + oxidized [NADPH--hemoprotein reductase] + H2O + H(+). The enzyme catalyses (5S)-hydroperoxy-(6E,8Z,11Z,14Z)-eicosatetraenoate = 5-oxo-(6E,8Z,11Z,14Z)-eicosatetraenoate + H2O. The catalysed reaction is (12S)-hydroperoxy-(5Z,8Z,10E,14Z)-eicosatetraenoate = 12-oxo-(5Z,8Z,10E,14Z)-eicosatetraenoate + H2O. It carries out the reaction (15S)-hydroperoxy-(5Z,8Z,11Z,13E)-eicosatetraenoate = 15-oxo-(5Z,8Z,11Z,13E)-eicosatetraenoate + H2O. It catalyses the reaction (13S)-hydroperoxy-(9Z,11E)-octadecadienoate = 13-oxo-(9Z,11E)-octadecadienoate + H2O. The enzyme catalyses (5Z,8Z,11Z,14Z)-eicosatetraenoate + reduced [NADPH--hemoprotein reductase] + O2 = 13-hydroxy-(5Z,8Z,11Z,14Z)-eicosatetraenoate + oxidized [NADPH--hemoprotein reductase] + H2O + H(+). The catalysed reaction is (5Z,8Z,11Z,14Z)-eicosatetraenoate + reduced [NADPH--hemoprotein reductase] + O2 = 19-hydroxy-(5Z,8Z,11Z,14Z)-eicosatetraenoate + oxidized [NADPH--hemoprotein reductase] + H2O + H(+). It carries out the reaction (9Z,12Z)-octadecadienoate + reduced [NADPH--hemoprotein reductase] + O2 = 11-hydroxy-(9Z,12Z)-octadecadienoate + oxidized [NADPH--hemoprotein reductase] + H2O + H(+). The protein operates within cofactor metabolism; retinol metabolism. It functions in the pathway steroid metabolism; cholesterol metabolism. Its pathway is lipid metabolism; arachidonate metabolism. Its function is as follows. A cytochrome P450 monooxygenase involved in the metabolism of various endogenous substrates, including fatty acids, steroid hormones and vitamins. Mechanistically, uses molecular oxygen inserting one oxygen atom into a substrate, and reducing the second into a water molecule, with two electrons provided by NADPH via cytochrome P450 reductase (NADPH--hemoprotein reductase). Catalyzes the hydroxylation of carbon-hydrogen bonds. Exhibits high catalytic activity for the formation of hydroxyestrogens from estrone (E1) and 17beta-estradiol (E2), namely 2-hydroxy E1 and E2. Metabolizes cholesterol toward 25-hydroxycholesterol, a physiological regulator of cellular cholesterol homeostasis. May act as a major enzyme for all-trans retinoic acid biosynthesis in the liver. Catalyzes two successive oxidative transformation of all-trans retinol to all-trans retinal and then to the active form all-trans retinoic acid. Primarily catalyzes stereoselective epoxidation of the last double bond of polyunsaturated fatty acids (PUFA), displaying a strong preference for the (R,S) stereoisomer. Catalyzes bisallylic hydroxylation and omega-1 hydroxylation of PUFA. May also participate in eicosanoids metabolism by converting hydroperoxide species into oxo metabolites (lipoxygenase-like reaction, NADPH-independent). Plays a role in the oxidative metabolism of xenobiotics. Catalyzes the N-hydroxylation of heterocyclic amines and the O-deethylation of phenacetin. Metabolizes caffeine via N3-demethylation. This is Cytochrome P450 1A2 (CYP1A2) from Balaenoptera acutorostrata (Common minke whale).